Reading from the N-terminus, the 230-residue chain is NADH dehydrogenase [ubiquinone] iron-sulfur protein 8, mitochondrial (230 aa).

The transit peptide at 1-42 (MAAILARKSLSALRSRQLVLAGQAWQQGANTSNGTLLGTRTF) directs the protein to the mitochondrion. 4Fe-4S ferredoxin-type domains are found at residues 122–151 (RRYP…IEAE) and 161–190 (TRYD…EGPN). [4Fe-4S] cluster is bound by residues Cys131, Cys134, Cys137, Cys141, Cys170, Cys173, Cys176, and Cys180.

The protein belongs to the complex I 23 kDa subunit family. Complex I is composed of about 45 different subunits. This is a component of the iron-sulfur (IP) fragment of the enzyme. Requires [4Fe-4S] cluster as cofactor.

The protein resides in the mitochondrion. The catalysed reaction is a ubiquinone + NADH + 5 H(+)(in) = a ubiquinol + NAD(+) + 4 H(+)(out). Functionally, core subunit of the mitochondrial membrane respiratory chain NADH dehydrogenase (Complex I) that is believed to belong to the minimal assembly required for catalysis. Complex I functions in the transfer of electrons from NADH to the respiratory chain. The immediate electron acceptor for the enzyme is believed to be ubiquinone. May donate electrons to ubiquinone. The protein is NADH dehydrogenase [ubiquinone] iron-sulfur protein 8, mitochondrial of Nicotiana tabacum (Common tobacco).